The primary structure comprises 396 residues: MPPKKGGDGLKPPPIIGRFGTSLKIGIVGLPNVGKSTFFNVLTNSQASAENFPFCTIDPNESRVPVPDERFDFLCQCHKPASKIPAFLNVVDIAGLVKGAHNGQGLGNAFLSHISACDGIFHLTRAFEDDDITHVEGSVDPIRDIEIIHEELQLKDEEMIGPIIDKLEKVAVRGGDKKLKPEYDIMCKVKSWVIDQKKPVRFYHDWNDKEIEVLNKHLLLTSKPMVYLVNLSEKDYIRKKNKWLIKIKEWVDKSDPGALVIPFSGALELKLQELSAEERQKYLEANMTQSALPKIIKAGFAALQLEYFFTAGPDEVRAWTIRKGTKAPQAAGKIHTDFEKGFIMAEVMKYDDFKDEGSENAVKAAGKYRQQGRNYIVEDGDIIFFKFNTPQQSKKK.

Positions 23–283 (LKIGIVGLPN…LSAEERQKYL (261 aa)) constitute an OBG-type G domain. 32-37 (NVGKST) provides a ligand contact to ATP. Mg(2+) is bound by residues Ser36 and Thr56. Leu231 lines the ATP pocket. A Nuclear export signal motif is present at residues 267–274 (LELKLQEL). N6-acetyllysine is present on Lys294. Residues 304–387 (QLEYFFTAGP…EDGDIIFFKF (84 aa)) form the TGS domain.

This sequence belongs to the TRAFAC class OBG-HflX-like GTPase superfamily. OBG GTPase family. YchF/OLA1 subfamily. Monomer. The cofactor is Mg(2+).

Its subcellular location is the cytoplasm. It localises to the nucleus. It is found in the nucleolus. In terms of biological role, hydrolyzes ATP, and can also hydrolyze GTP with lower efficiency. Has lower affinity for GTP. The protein is Obg-like ATPase 1 (Ola1) of Rattus norvegicus (Rat).